We begin with the raw amino-acid sequence, 183 residues long: Inner membrane-spanning protein YciB (183 aa).

Transmembrane regions (helical) follow at residues 22–42 (IYAATGVLIAATAIQLVITYL), 50–70 (MHLATFAMVTVFGSLTLFFHD), 72–92 (AFIKWKVSIVYALFAIGLIAS), 118–138 (VTWYWVGFFVLCSFANIYIAF), and 148–168 (FKVFGLTALTLINTVITVVYL).

This sequence belongs to the YciB family.

It is found in the cell inner membrane. In terms of biological role, plays a role in cell envelope biogenesis, maintenance of cell envelope integrity and membrane homeostasis. In Shewanella frigidimarina (strain NCIMB 400), this protein is Inner membrane-spanning protein YciB.